A 520-amino-acid polypeptide reads, in one-letter code: Glucose starvation modulator protein 1 (520 aa).

Positions 20–48 (CSFCHSKHLQCSNNRPCKNCVKRNIADQC) form a DNA-binding region, zn(2)-C6 fungal-type. 2 disordered regions span residues 63 to 104 (AKNK…SSGR) and 194 to 213 (PASP…PNEM). Residues 74–85 (SLESSSSPFSPL) show a composition bias toward low complexity. The span at 90–104 (INSQSSQPLDPSSGR) shows a compositional bias: polar residues. Positions 376–445 (DYEKLSHLNS…FKLFKSVAVG (70 aa)) constitute a PAS domain.

The protein belongs to the ERT1/acuK family.

Its subcellular location is the nucleus. Its function is as follows. Transcription factor which regulates nonfermentable carbon utilization. The protein is Glucose starvation modulator protein 1 (GSM1) of Meyerozyma guilliermondii (strain ATCC 6260 / CBS 566 / DSM 6381 / JCM 1539 / NBRC 10279 / NRRL Y-324) (Yeast).